The following is a 114-amino-acid chain: Phosphoribosyl-AMP cyclohydrolase (114 aa).

Mg(2+) is bound at residue Asp80. Cys81 contacts Zn(2+). 2 residues coordinate Mg(2+): Asp82 and Asp84. Cys97 and Cys104 together coordinate Zn(2+).

This sequence belongs to the PRA-CH family. In terms of assembly, homodimer. Mg(2+) is required as a cofactor. Requires Zn(2+) as cofactor.

The protein localises to the cytoplasm. The enzyme catalyses 1-(5-phospho-beta-D-ribosyl)-5'-AMP + H2O = 1-(5-phospho-beta-D-ribosyl)-5-[(5-phospho-beta-D-ribosylamino)methylideneamino]imidazole-4-carboxamide. The protein operates within amino-acid biosynthesis; L-histidine biosynthesis; L-histidine from 5-phospho-alpha-D-ribose 1-diphosphate: step 3/9. Its function is as follows. Catalyzes the hydrolysis of the adenine ring of phosphoribosyl-AMP. The protein is Phosphoribosyl-AMP cyclohydrolase of Rhodococcus jostii (strain RHA1).